Here is a 711-residue protein sequence, read N- to C-terminus: Protein ACTIVITY OF BC1 COMPLEX KINASE 3, chloroplastic (711 aa).

A chloroplast-targeting transit peptide spans 1 to 42 (MSLVVGQSLGLTLVGDGLSLRNSKINVGKSKFFSVNRRRLAR). One can recognise a Protein kinase domain in the interval 216–546 (SVSPEPIAAA…IELLFKDGKF (331 aa)). Residues 222 to 230 (IAAASLGQV) and K245 each bind ATP. D379 acts as the Proton acceptor in catalysis.

It belongs to the protein kinase superfamily. ADCK protein kinase family. As to quaternary structure, interacts with ABC1K1 in plastoglobules (PG). Interacts with PGM48.

It is found in the plastid. The protein localises to the chloroplast. The protein resides in the plastoglobule. It carries out the reaction L-seryl-[protein] + ATP = O-phospho-L-seryl-[protein] + ADP + H(+). The catalysed reaction is L-threonyl-[protein] + ATP = O-phospho-L-threonyl-[protein] + ADP + H(+). Kinase that can phosphorylate the tocopherol cyclase VTE1, a key enzyme of tocopherol (vitamin E) metabolism and involved in the recycling of oxidated alpha-tocopherol quinone, possibly stabilizing it at plastoglobules. Also regulates membrane prenylquinone composition. Required for photooxidative stress responses to prevent photosystem II core and chlorophyll degradations. Together with ABC1K1, contributes to plastoglobule (PG) function in prenyl-lipid metabolism, stress response, and thylakoid remodeling. Promotes photodamage of chloroplasts under continuous red light, thus working in opposition to ABC1K1. The protein is Protein ACTIVITY OF BC1 COMPLEX KINASE 3, chloroplastic of Arabidopsis thaliana (Mouse-ear cress).